The chain runs to 153 residues: Putative tRNA (cytidine(34)-2'-O)-methyltransferase (153 aa).

S-adenosyl-L-methionine-binding residues include Gly-102, Ile-122, and Ser-131.

The protein belongs to the class IV-like SAM-binding methyltransferase superfamily. RNA methyltransferase TrmH family. TrmL subfamily.

The protein localises to the cytoplasm. It carries out the reaction cytidine(34) in tRNA + S-adenosyl-L-methionine = 2'-O-methylcytidine(34) in tRNA + S-adenosyl-L-homocysteine + H(+). It catalyses the reaction 5-carboxymethylaminomethyluridine(34) in tRNA(Leu) + S-adenosyl-L-methionine = 5-carboxymethylaminomethyl-2'-O-methyluridine(34) in tRNA(Leu) + S-adenosyl-L-homocysteine + H(+). Could methylate the ribose at the nucleotide 34 wobble position in tRNA. The chain is Putative tRNA (cytidine(34)-2'-O)-methyltransferase from Synechocystis sp. (strain ATCC 27184 / PCC 6803 / Kazusa).